The primary structure comprises 817 residues: Trehalose-phosphatase (817 aa).

Residues 1-547 (MSVYGKIPST…LAATKTDQRI (547 aa)) are glycosyltransferase.

The protein in the N-terminal section; belongs to the glycosyltransferase 20 family. This sequence in the C-terminal section; belongs to the trehalose phosphatase family. In terms of assembly, component of the trehalose synthase complex that contains at least tps1, ntp1, and tpp1. Interacts with tps1. Interacts with ntp1. Mg(2+) is required as a cofactor.

It catalyses the reaction alpha,alpha-trehalose 6-phosphate + H2O = alpha,alpha-trehalose + phosphate. It participates in carbohydrate biosynthesis. Its function is as follows. Phosphatase catalytic subunit of the trehalose synthase complex that catalyzes the production of trehalose from glucose-6-phosphate and UDP-alpha-D-glucose in a two step process. The disaccharide trehalose serves as a storage carbohydrate that is mobilized during nutrient stress and spore germination. Together with ntp1, regulates the level of trehalose as a protectant for cell integrity during thermal, osmotic, and oxidative stress. In Schizosaccharomyces pombe (strain 972 / ATCC 24843) (Fission yeast), this protein is Trehalose-phosphatase.